An 859-amino-acid polypeptide reads, in one-letter code: Fanconi anemia group B protein (859 aa).

At Thr-2 the chain carries N-acetylthreonine.

As to quaternary structure, belongs to the multisubunit FA complex composed of FANCA, FANCB, FANCC, FANCE, FANCF, FANCG, FANCL/PHF9 and FANCM. The complex is not found in FA patients.

The protein resides in the nucleus. In terms of biological role, DNA repair protein required for FANCD2 ubiquitination. The sequence is that of Fanconi anemia group B protein (FANCB) from Homo sapiens (Human).